Reading from the N-terminus, the 935-residue chain is MVEASEGTLEPIGAVQRTLVGREATEPMRADIGLLGAILGDTVREQNGQQVFELVERARVESFRVRRSEIDRAELARMFAGIDIHQAIPVIRAFSHFALLANVAEDIHRERRRAIHVAAGEPPQDSSLAATYAKLDRAQLDSATVAEALRGAVVSPVITAHPTETRRRTVFVTQHRITELMRLHAEGHIETDDGRNIELELRRQVLTLWQTALIRLSRLQITDEIEVGLRYYAAAFFKVIPRVNAEVRNALRARWPGADLLDEPIVAPGSWIGGDRDGNPNVTADVVRRATGDAAYTALAHYLAELTACEQELSMSARLVAVTPELAALAEDCAEKARADEPYRRALRVIRGRLTATAAEILDRRPQHELDLGLPPYATPAELRGDLDTVDASLRAHGSALLADDRLALLREGVRVFGFHLCGLDMRQNSDVHEEVVAELLAWAGVHPDYRSLPEDERVELLAAELGTRRPLVGDRAELSELADKELGVVRAAAHAIRRYGPAAVPNYVISMCRSVSDVLEAAILLKEAGLIDASGPEPYCPVGISPLFETIEDLHNGAAILHAMLELPLYRALVAARGQSQEVMLGYSDSNKDGGYLASSWAVYRAELALVEVARKTGIRLRLFHGRGGTVGRGGGPSYEAILAQPPGAVNGSLRLTEQGEVIAAKYAEPQVAQRNLESLVAATLESTLLDVEGLGDTAEPAYAVLDEVAVLAQRAYAELVHETPGFVDYFMASTPVSEIGSLNIGSRPTSRKPTESIADLRAIPWVLAWSQSRVMLPGWYGTGSAFEQWIAAGPQSRAERVDILHDLYRRWPFFRSVLSNLAQVLAKSDLGLAAQYAELVDDAALRRRVFGKIADEHRRTIAMHKLITGQDNLLADNPALARSVFNRFPYLEPLNHLQVELLRRYRSGDDDELVQRGILLTMNGLTSALRNSG.

Active-site residues include His161 and Lys593.

Belongs to the PEPCase type 1 family. Requires Mg(2+) as cofactor.

It catalyses the reaction oxaloacetate + phosphate = phosphoenolpyruvate + hydrogencarbonate. Functionally, forms oxaloacetate, a four-carbon dicarboxylic acid source for the tricarboxylic acid cycle. The polypeptide is Phosphoenolpyruvate carboxylase (Mycobacterium avium (strain 104)).